Here is a 162-residue protein sequence, read N- to C-terminus: Non-specific lipid transfer protein GPI-anchored 27 (162 aa).

Residues 1-29 form the signal peptide; that stretch reads MAYTNKVAVAVGAAVVFLAVVMNPRWTEA. Cystine bridges form between C39–C78, C50–C62, C63–C102, and C76–C110. Residue N68 is glycosylated (N-linked (GlcNAc...) asparagine). N124 and N135 each carry an N-linked (GlcNAc...) asparagine glycan. A lipid anchor (GPI-anchor amidated serine) is attached at S137. The propeptide at 138–162 is removed in mature form; sequence VGGKNKVATSMSAFGLVAILLFVMF.

Belongs to the plant LTP family.

Its subcellular location is the cell membrane. Its function is as follows. Probable lipid transfer protein. This Arabidopsis thaliana (Mouse-ear cress) protein is Non-specific lipid transfer protein GPI-anchored 27.